A 1197-amino-acid chain; its full sequence is Probable DNA polymerase (1197 aa).

The protein belongs to the DNA polymerase type-B family.

It is found in the mitochondrion. The enzyme catalyses DNA(n) + a 2'-deoxyribonucleoside 5'-triphosphate = DNA(n+1) + diphosphate. This Podospora anserina (Pleurage anserina) protein is Probable DNA polymerase.